A 242-amino-acid chain; its full sequence is Ubiquinone biosynthesis O-methyltransferase (242 aa).

S-adenosyl-L-methionine contacts are provided by Arg44, Gly64, Asp85, and Met129.

This sequence belongs to the methyltransferase superfamily. UbiG/COQ3 family.

The catalysed reaction is a 3-demethylubiquinol + S-adenosyl-L-methionine = a ubiquinol + S-adenosyl-L-homocysteine + H(+). It catalyses the reaction a 3-(all-trans-polyprenyl)benzene-1,2-diol + S-adenosyl-L-methionine = a 2-methoxy-6-(all-trans-polyprenyl)phenol + S-adenosyl-L-homocysteine + H(+). It functions in the pathway cofactor biosynthesis; ubiquinone biosynthesis. Functionally, O-methyltransferase that catalyzes the 2 O-methylation steps in the ubiquinone biosynthetic pathway. This is Ubiquinone biosynthesis O-methyltransferase from Citrobacter koseri (strain ATCC BAA-895 / CDC 4225-83 / SGSC4696).